The following is a 240-amino-acid chain: UDP-2,3-diacylglucosamine hydrolase (240 aa).

Mn(2+) contacts are provided by Asp-9, His-11, Asp-43, Asn-81, and His-116. 81–82 (NR) is a substrate binding site. Substrate contacts are provided by Asp-124, Ser-162, Lys-166, Lys-169, and His-197. His-197 and His-199 together coordinate Mn(2+).

The protein belongs to the LpxH family. Requires Mn(2+) as cofactor.

The protein resides in the cell inner membrane. The catalysed reaction is UDP-2-N,3-O-bis[(3R)-3-hydroxytetradecanoyl]-alpha-D-glucosamine + H2O = 2-N,3-O-bis[(3R)-3-hydroxytetradecanoyl]-alpha-D-glucosaminyl 1-phosphate + UMP + 2 H(+). It functions in the pathway glycolipid biosynthesis; lipid IV(A) biosynthesis; lipid IV(A) from (3R)-3-hydroxytetradecanoyl-[acyl-carrier-protein] and UDP-N-acetyl-alpha-D-glucosamine: step 4/6. Hydrolyzes the pyrophosphate bond of UDP-2,3-diacylglucosamine to yield 2,3-diacylglucosamine 1-phosphate (lipid X) and UMP by catalyzing the attack of water at the alpha-P atom. Involved in the biosynthesis of lipid A, a phosphorylated glycolipid that anchors the lipopolysaccharide to the outer membrane of the cell. The chain is UDP-2,3-diacylglucosamine hydrolase from Neisseria meningitidis serogroup A / serotype 4A (strain DSM 15465 / Z2491).